We begin with the raw amino-acid sequence, 699 residues long: Polyribonucleotide nucleotidyltransferase (699 aa).

Mg(2+) is bound by residues Asp-493 and Asp-499. The KH domain maps to Pro-560–Ile-620. Positions Gly-630–Ala-697 constitute an S1 motif domain.

The protein belongs to the polyribonucleotide nucleotidyltransferase family. The cofactor is Mg(2+).

Its subcellular location is the cytoplasm. It catalyses the reaction RNA(n+1) + phosphate = RNA(n) + a ribonucleoside 5'-diphosphate. In terms of biological role, involved in mRNA degradation. Catalyzes the phosphorolysis of single-stranded polyribonucleotides processively in the 3'- to 5'-direction. The polypeptide is Polyribonucleotide nucleotidyltransferase (Thermosipho melanesiensis (strain DSM 12029 / CIP 104789 / BI429)).